We begin with the raw amino-acid sequence, 1358 residues long: DNA-directed RNA polymerase subunit beta (1358 aa).

Belongs to the RNA polymerase beta chain family. As to quaternary structure, the RNAP catalytic core consists of 2 alpha, 1 beta, 1 beta' and 1 omega subunit. When a sigma factor is associated with the core the holoenzyme is formed, which can initiate transcription.

The enzyme catalyses RNA(n) + a ribonucleoside 5'-triphosphate = RNA(n+1) + diphosphate. Its function is as follows. DNA-dependent RNA polymerase catalyzes the transcription of DNA into RNA using the four ribonucleoside triphosphates as substrates. The polypeptide is DNA-directed RNA polymerase subunit beta (Chromohalobacter salexigens (strain ATCC BAA-138 / DSM 3043 / CIP 106854 / NCIMB 13768 / 1H11)).